A 304-amino-acid chain; its full sequence is UDP-3-O-acyl-N-acetylglucosamine deacetylase (304 aa).

Zn(2+) is bound by residues His78, His235, and Asp239. The active-site Proton donor is His262.

Belongs to the LpxC family. Zn(2+) serves as cofactor.

The enzyme catalyses a UDP-3-O-[(3R)-3-hydroxyacyl]-N-acetyl-alpha-D-glucosamine + H2O = a UDP-3-O-[(3R)-3-hydroxyacyl]-alpha-D-glucosamine + acetate. It participates in glycolipid biosynthesis; lipid IV(A) biosynthesis; lipid IV(A) from (3R)-3-hydroxytetradecanoyl-[acyl-carrier-protein] and UDP-N-acetyl-alpha-D-glucosamine: step 2/6. In terms of biological role, catalyzes the hydrolysis of UDP-3-O-myristoyl-N-acetylglucosamine to form UDP-3-O-myristoylglucosamine and acetate, the committed step in lipid A biosynthesis. This Anaeromyxobacter sp. (strain Fw109-5) protein is UDP-3-O-acyl-N-acetylglucosamine deacetylase.